The following is a 369-amino-acid chain: Dihydroorotate dehydrogenase (quinone) (369 aa).

FMN contacts are provided by residues 66-70 and threonine 90; that span reads AGFDK. Residue lysine 70 participates in substrate binding. Position 115 to 119 (115 to 119) interacts with substrate; that stretch reads NRMGF. FMN-binding residues include asparagine 143 and asparagine 176. Asparagine 176 contacts substrate. The Nucleophile role is filled by serine 179. Asparagine 181 lines the substrate pocket. The FMN site is built by lysine 217 and threonine 245. 246–247 contributes to the substrate binding site; it reads NT. Residues glycine 271, glycine 300, and 321 to 322 each bind FMN; that span reads YT.

The protein belongs to the dihydroorotate dehydrogenase family. Type 2 subfamily. Monomer. It depends on FMN as a cofactor.

It is found in the cell membrane. The enzyme catalyses (S)-dihydroorotate + a quinone = orotate + a quinol. The protein operates within pyrimidine metabolism; UMP biosynthesis via de novo pathway; orotate from (S)-dihydroorotate (quinone route): step 1/1. Functionally, catalyzes the conversion of dihydroorotate to orotate with quinone as electron acceptor. The chain is Dihydroorotate dehydrogenase (quinone) from Nocardia farcinica (strain IFM 10152).